A 2339-amino-acid polypeptide reads, in one-letter code: Voltage-dependent N-type calcium channel subunit alpha-1B (2339 aa).

A disordered region spans residues 1–37; that stretch reads MVRFGDELGGRYGGPGGGERARGGGAGGAGGPGPGGL. Over 1–90 the chain is Cytoplasmic; that stretch reads MVRFGDELGG…DNVVRKYAKR (90 aa). A compositionally biased stretch (gly residues) spans 10-37; that stretch reads GRYGGPGGGERARGGGAGGAGGPGPGGL. R22 is subject to Omega-N-methylarginine. Residues 82–359 form an I repeat; that stretch reads NVVRKYAKRI…LVLGVLSGEF (278 aa). A helical membrane pass occupies residues 91–114; the sequence is ITEWPPFEYMILATIIANCIVLAL. Residues 115-131 are Extracellular-facing; the sequence is EQHLPDGDKTPMSERLD. The helical transmembrane segment at 132-152 threads the bilayer; that stretch reads DTEPYFIGIFCFEAGIKIIAL. The Cytoplasmic portion of the chain corresponds to 153 to 163; sequence GFVFHKGSYLR. A helical membrane pass occupies residues 164–182; that stretch reads NGWNVMDFVVVLTGILATA. Topologically, residues 183–187 are extracellular; it reads GTDFD. The chain crosses the membrane as a helical span at residues 188 to 211; it reads LRTLRAVRVLRPLKLVSGIPSLQV. At 212–221 the chain is on the cytoplasmic side; that stretch reads VLKSIMKAMV. Residues 222–244 form a helical membrane-spanning segment; that stretch reads PLLQIGLLLFFAILMFAIIGLEF. The Extracellular portion of the chain corresponds to 245–331; that stretch reads YMGKFHKACF…NTNDAAGNTW (87 aa). Residue N256 is glycosylated (N-linked (GlcNAc...) asparagine). The chain crosses the membrane as a helical span at residues 332–356; it reads NWLYFIPLIIIGSFFMLNLVLGVLS. The Cytoplasmic portion of the chain corresponds to 357-482; the sequence is GEFAKERERV…FFIRRMVKAQ (126 aa). Residues 379-396 are binding to the beta subunit; sequence QQIERELNGYLEWIFKAE. S411 carries the post-translational modification Phosphoserine. 451 to 458 serves as a coordination point for ATP; the sequence is ASLKSGKT. One copy of the II repeat lies at 468–712; the sequence is EKMFRFFIRR…VFLAIAVDNL (245 aa). Residues 483 to 501 form a helical membrane-spanning segment; it reads SFYWVVLCVVALNTLCVAM. Topologically, residues 502–511 are extracellular; sequence VHYNQPRRLT. The chain crosses the membrane as a helical span at residues 512–534; sequence TTLYFAEFVFLGLFLTEMSLKMY. The Cytoplasmic segment spans residues 535–544; that stretch reads GLGPRSYFRS. S544 contacts a 1,2-diacyl-sn-glycero-3-phospho-(1D-myo-inositol-4,5-bisphosphate). A helical transmembrane segment spans residues 545–566; that stretch reads SFNCFDFGVIVGSVFEVVWAAI. At 567 to 573 the chain is on the extracellular side; the sequence is KPGSSFG. Residues 574–586 traverse the membrane as a helical segment; that stretch reads ISVLRALRLLRIF. R584 and K587 together coordinate a 1,2-diacyl-sn-glycero-3-phospho-(1D-myo-inositol-4,5-bisphosphate). Over 587-604 the chain is Cytoplasmic; that stretch reads KVTKYWSSLRNLVVSLLN. Residues 605–630 form a helical membrane-spanning segment; the sequence is SMKSIISLLFLLFLFIVVFALLGMQL. Over 631–682 the chain is Extracellular; sequence FGGQFNFQDETPTTNFDTFPAAILTVFQILTGEDWNAVMYHGIESQGGVSKG. A helical membrane pass occupies residues 683-709; sequence MFSSFYFIVLTLFGNYTLLNVFLAIAV. At 710–1151 the chain is on the cytoplasmic side; sequence DNLANAQELT…FCHYIVTMRY (442 aa). Residues S745, S748, and S783 each carry the phosphoserine modification. Composition is skewed to basic and acidic residues over residues 816–826, 857–886, 922–932, and 965–976; these read PLVVELGRDGA, KDKT…EERP, GSPEEAAEREP, and GPREAESGEEPA. Disordered regions lie at residues 816–1038 and 1054–1076; these read PLVV…VTVG and QPED…DPNT. The segment covering 977-986 has biased composition (basic residues); that stretch reads RRHRARHKAQ. Basic and acidic residues predominate over residues 990 to 1029; it reads EAVEKETTEKEATEKEAEIVEADKEKELRNHQPREPHCDL. S1069 is modified (phosphoserine). One copy of the III repeat lies at 1137-1419; the sequence is NLLRRFCHYI…IFVALIIITF (283 aa). Residues 1152–1170 traverse the membrane as a helical segment; sequence FEVVILVVIALSSIALAAE. Residues 1171–1178 lie on the Extracellular side of the membrane; sequence DPVRTDSP. Residues 1179-1203 form a helical membrane-spanning segment; it reads RNNALKYLDYIFTGVFTFEMVIKMI. Residues 1204-1217 lie on the Cytoplasmic side of the membrane; sequence DLGLLLHPGAYFRD. Residues 1218 to 1238 form a helical membrane-spanning segment; that stretch reads LWNILDFIVVSGALVAFAFSG. At 1239-1244 the chain is on the extracellular side; it reads SKGKDI. The helical transmembrane segment at 1245-1265 threads the bilayer; that stretch reads NTIKSLRVLRVLRPLKTIKRL. At 1266 to 1283 the chain is on the cytoplasmic side; sequence PKLKAVFDCVVNSLKNVL. Residues 1284–1303 form a helical membrane-spanning segment; the sequence is NILIVYMLFMFIFAVIAVQL. Topologically, residues 1304–1390 are extracellular; sequence FKGKFFYCTD…EQGPSPGYRM (87 aa). Residues 1391 to 1416 form a helical membrane-spanning segment; that stretch reads ELSIFYVVYFVVFPFFFVNIFVALII. Over 1417-1471 the chain is Cytoplasmic; sequence ITFQEQGDKVMSECSLEKNERACIDFAISAKPLTRYMPQNRQSFQYKTWTFVVSP. The stretch at 1456-1711 is one IV repeat; it reads NRQSFQYKTW…LFVAVIMDNF (256 aa). The chain crosses the membrane as a helical span at residues 1472-1490; it reads PFEYFIMAMIALNTVVLMM. The Extracellular segment spans residues 1491–1498; that stretch reads KFYDAPYE. A helical transmembrane segment spans residues 1499–1523; sequence YELMLKCLNIVFTSMFSMECVLKII. The Cytoplasmic portion of the chain corresponds to 1524–1533; it reads AFGVLNYFRD. The helical transmembrane segment at 1534 to 1555 threads the bilayer; the sequence is AWNVFDFVTVLGSITDILVTEI. Topologically, residues 1556 to 1563 are extracellular; the sequence is AETNNFIN. N1563 is a glycosylation site (N-linked (GlcNAc...) asparagine). Residues 1564 to 1582 traverse the membrane as a helical segment; the sequence is LSFLRLFRAARLIKLLRQG. Over 1583–1601 the chain is Cytoplasmic; sequence YTIRILLWTFVQSFKALPY. The helical transmembrane segment at 1602–1621 threads the bilayer; sequence VCLLIAMLFFIYAIIGMQVF. Topologically, residues 1622-1683 are extracellular; sequence GNIALDDDTS…ANATECGSDF (62 aa). N-linked (GlcNAc...) asparagine glycosylation occurs at N1675. A helical membrane pass occupies residues 1684-1707; the sequence is AYFYFVSFIFLCSFLMLNLFVAVI. Topologically, residues 1708–2339 are cytoplasmic; it reads MDNFEYLTRD…YHHPDQDHWC (632 aa). An EF-hand domain is found at 1724–1759; the sequence is HHLDEFIRVWAEYDPAACGRISYNDMFEMLKHMSPP. The Ca(2+) site is built by D1737, R1743, and D1748. A compositionally biased stretch (polar residues) spans 1916-1931; it reads SSTSLSNGGAIQNQES. Disordered regions lie at residues 1916–1968 and 1981–2206; these read SSTS…VGRS and TRRG…YKTA. Positions 1946–1960 are enriched in basic and acidic residues; sequence DAPHEARPPLERGHS. Residues 2049 to 2063 are compositionally biased toward basic residues; it reads SHHHHHRCHRRRDRK. At S2066 the chain carries Phosphoserine. Residues 2098–2116 are compositionally biased toward basic and acidic residues; that stretch reads CRRERERRQERGRSQERRQ. Over residues 2143-2153 the composition is skewed to low complexity; that stretch reads PSLSSHPTSPT. A compositionally biased stretch (polar residues) spans 2164–2180; it reads GSGSVNGSPLLSTSGAS. Phosphoserine is present on residues S2224, S2233, and S2256.

The protein belongs to the calcium channel alpha-1 subunit (TC 1.A.1.11) family. CACNA1B subfamily. Multisubunit complex consisting of alpha-1, alpha-2, beta and delta subunits in a 1:1:1:1 ratio. The channel activity is directed by the pore-forming and voltage-sensitive alpha-1 subunit. In many cases, this subunit is sufficient to generate voltage-sensitive calcium channel activity. The auxiliary subunits beta and alpha-2/delta linked by a disulfide bridge regulate the channel activity. Interacts with RIMS1. Interacts with FMR1 (via C-terminus); this interaction induces a decrease in the number of presynaptic functional CACNA1B channels at the cell surface. Phosphorylated in vitro by CaM-kinase II, PKA, PKC and CGPK. In terms of tissue distribution, isoform Alpha-1b-1 and isoform Alpha-1b-2 are expressed in the central nervous system, but not in skeletal muscle or aorta. Expressed in the cerebral white matter, cortex, hippocampus, basal ganglia, and cerebellum.

The protein localises to the membrane. It carries out the reaction Ca(2+)(in) = Ca(2+)(out). Is specifically blocked by omega-conotoxin GVIA. Is specifically blocked by omega-conotoxin MVIIA (ziconotide). Is insensitive to dihydropyridines (DHP). Its activity is regulated as follows. Is specifically blocked by omega-conotoxin MVIIA (ziconotide). Is insensitive to dihydropyridines (DHP). Functionally, voltage-sensitive calcium channels (VSCC) mediate the entry of calcium ions into excitable cells and are also involved in a variety of calcium-dependent processes, including muscle contraction, hormone or neurotransmitter release, gene expression, cell motility, cell division and cell death. This alpha-1B subunit gives rise to N-type calcium currents. N-type calcium channels belong to the 'high-voltage activated' (HVA) group. They are involved in pain signaling. Calcium channels containing alpha-1B subunit may play a role in directed migration of immature neurons. Mediates Ca(2+) release probability at hippocampal neuronal soma and synaptic terminals. In terms of biological role, voltage-sensitive calcium channels (VSCC) mediate the entry of calcium ions into excitable cells and are also involved in a variety of calcium-dependent processes, including muscle contraction, hormone or neurotransmitter release, gene expression, cell motility, cell division and cell death. This alpha-1B subunit gives rise to N-type calcium currents. This Homo sapiens (Human) protein is Voltage-dependent N-type calcium channel subunit alpha-1B (CACNA1B).